A 96-amino-acid chain; its full sequence is Protein RnfH (96 aa).

It belongs to the UPF0125 (RnfH) family.

This is Protein RnfH from Hahella chejuensis (strain KCTC 2396).